We begin with the raw amino-acid sequence, 230 residues long: UPF0494 membrane protein PB2B2.14c (230 aa).

3 helical membrane passes run 78-98 (WPLLIIWCILIVFAIDKNFEV), 120-140 (IWGPIAIYICLFVLLLLGLIY), and 148-168 (AIPLISIVIAAVVVIIAVAMV).

It belongs to the UPF0494 family.

The protein resides in the membrane. In Schizosaccharomyces pombe (strain 972 / ATCC 24843) (Fission yeast), this protein is UPF0494 membrane protein PB2B2.14c.